The chain runs to 467 residues: Probable rhamnogalacturonase A (467 aa).

The N-terminal stretch at 1 to 19 is a signal peptide; that stretch reads MHSLSLISLALLSPLLVNA. A disulfide bridge links Cys-40 with Cys-66. Asp-217 serves as the catalytic Proton donor. Cys-219 and Cys-236 are joined by a disulfide. 2 N-linked (GlcNAc...) asparagine glycosylation sites follow: Asn-237 and Asn-252. His-292 is a catalytic residue. N-linked (GlcNAc...) asparagine glycosylation occurs at Asn-319. 2 disulfides stabilise this stretch: Cys-342–Cys-348 and Cys-370–Cys-379.

It belongs to the glycosyl hydrolase 28 family.

Its subcellular location is the secreted. It carries out the reaction Endohydrolysis of alpha-D-GalA-(1-&gt;2)-alpha-L-Rha glycosidic bond in the rhamnogalacturonan I backbone with initial inversion of anomeric configuration releasing oligosaccharides with beta-D-GalA at the reducing end.. Functionally, pectinolytic enzymes consist of four classes of enzymes: pectine lyase, polygalacturonase, pectin methylesterase and rhamnogalacturonase. Hydrolyzes alpha-D-galacturonopyranosyl-(1,2)-alpha-L-rhamnopyranosyl linkages in the backbone of the hairy regions of pectins. This is Probable rhamnogalacturonase A (rhgA) from Aspergillus oryzae (strain ATCC 42149 / RIB 40) (Yellow koji mold).